A 69-amino-acid polypeptide reads, in one-letter code: Iota-conotoxin LtIIIA (69 aa).

An N-terminal signal peptide occupies residues 1-20; the sequence is MLKMGVLLFTFLVLFPLTTL. Residues 21–52 constitute a propeptide that is removed on maturation; sequence ELDTDRPVERHAAIKQDLKPQERRGIRLHAPR. 4-carboxyglutamate is present on residues Glu54 and Glu57. 3 disulfides stabilise this stretch: Cys55/Cys67, Cys56/Cys65, and Cys61/Cys68. Pro58 bears the 4-hydroxyproline mark.

As to expression, expressed by the venom duct.

It is found in the secreted. Iota-conotoxins bind to voltage-gated sodium channels and act as agonists by shifting the voltage-dependence of activation to more hyperpolarized levels. This toxin enhances tetrodotoxin-sensitive sodium current in rat dorsal root ganglion neurons. The sequence is that of Iota-conotoxin LtIIIA from Conus litteratus (Lettered cone).